The following is a 360-amino-acid chain: DNA polymerase IV (360 aa).

One can recognise a UmuC domain in the interval Ile-8–Gly-189. Mg(2+) is bound by residues Asp-12 and Asp-107. The active site involves Glu-108.

This sequence belongs to the DNA polymerase type-Y family. In terms of assembly, monomer. It depends on Mg(2+) as a cofactor.

The protein localises to the cytoplasm. The catalysed reaction is DNA(n) + a 2'-deoxyribonucleoside 5'-triphosphate = DNA(n+1) + diphosphate. In terms of biological role, poorly processive, error-prone DNA polymerase involved in untargeted mutagenesis. Copies undamaged DNA at stalled replication forks, which arise in vivo from mismatched or misaligned primer ends. These misaligned primers can be extended by PolIV. Exhibits no 3'-5' exonuclease (proofreading) activity. May be involved in translesional synthesis, in conjunction with the beta clamp from PolIII. This is DNA polymerase IV from Vibrio cholerae serotype O1 (strain ATCC 39315 / El Tor Inaba N16961).